Consider the following 444-residue polypeptide: Tol-Pal system protein TolB (444 aa).

The signal sequence occupies residues 1–19; the sequence is MRNIIYFILSLLFSVTSYA.

The protein belongs to the TolB family. The Tol-Pal system is composed of five core proteins: the inner membrane proteins TolA, TolQ and TolR, the periplasmic protein TolB and the outer membrane protein Pal. They form a network linking the inner and outer membranes and the peptidoglycan layer.

Its subcellular location is the periplasm. Its function is as follows. Part of the Tol-Pal system, which plays a role in outer membrane invagination during cell division and is important for maintaining outer membrane integrity. This is Tol-Pal system protein TolB from Rickettsia rickettsii (strain Sheila Smith).